The following is an 89-amino-acid chain: Phosphoribulokinase, chloroplastic (89 aa).

The segment at 1–22 (LTSVFGGAAEPPRGGNPDSNTL) is disordered.

Belongs to the phosphoribulokinase family.

It is found in the plastid. The protein localises to the chloroplast. It catalyses the reaction D-ribulose 5-phosphate + ATP = D-ribulose 1,5-bisphosphate + ADP + H(+). The protein operates within carbohydrate biosynthesis; Calvin cycle. Its activity is regulated as follows. Light regulated via thioredoxin by reversible oxidation/reduction of sulfhydryl/disulfide groups. The chain is Phosphoribulokinase, chloroplastic from Vitis sp. (Grape).